A 141-amino-acid polypeptide reads, in one-letter code: Galactose-6-phosphate isomerase subunit LacA 1 (141 aa).

Belongs to the LacAB/RpiB family. Heteromultimeric protein consisting of LacA and LacB.

It carries out the reaction aldehydo-D-galactose 6-phosphate = keto-D-tagatose 6-phosphate. It functions in the pathway carbohydrate metabolism; D-galactose 6-phosphate degradation; D-tagatose 6-phosphate from D-galactose 6-phosphate: step 1/1. The chain is Galactose-6-phosphate isomerase subunit LacA 1 from Streptococcus pyogenes serotype M18 (strain MGAS8232).